The primary structure comprises 234 residues: Large ribosomal subunit protein uL1 (234 aa).

It belongs to the universal ribosomal protein uL1 family. Part of the 50S ribosomal subunit.

Its function is as follows. Binds directly to 23S rRNA. The L1 stalk is quite mobile in the ribosome, and is involved in E site tRNA release. Functionally, protein L1 is also a translational repressor protein, it controls the translation of the L11 operon by binding to its mRNA. The chain is Large ribosomal subunit protein uL1 from Edwardsiella ictaluri (strain 93-146).